The chain runs to 245 residues: Tryptophan synthase alpha chain (245 aa).

Residues Glu-37 and Asp-48 each act as proton acceptor in the active site.

The protein belongs to the TrpA family. Tetramer of two alpha and two beta chains.

It catalyses the reaction (1S,2R)-1-C-(indol-3-yl)glycerol 3-phosphate + L-serine = D-glyceraldehyde 3-phosphate + L-tryptophan + H2O. The protein operates within amino-acid biosynthesis; L-tryptophan biosynthesis; L-tryptophan from chorismate: step 5/5. The alpha subunit is responsible for the aldol cleavage of indoleglycerol phosphate to indole and glyceraldehyde 3-phosphate. The sequence is that of Tryptophan synthase alpha chain from Saccharolobus solfataricus (strain ATCC 35092 / DSM 1617 / JCM 11322 / P2) (Sulfolobus solfataricus).